A 415-amino-acid polypeptide reads, in one-letter code: Granaticin polyketide putative beta-ketoacyl synthase 2 (415 aa).

In terms of domain architecture, Ketosynthase family 3 (KS3) spans 6-406; sequence RRRAVVTGLS…GFNSAVVVTL (401 aa).

This sequence belongs to the thiolase-like superfamily. Beta-ketoacyl-ACP synthases family.

Its pathway is antibiotic biosynthesis; granaticin biosynthesis. The protein is Granaticin polyketide putative beta-ketoacyl synthase 2 (gra-orf2) of Streptomyces violaceoruber.